Reading from the N-terminus, the 281-residue chain is Diaminopimelate epimerase (281 aa).

Substrate-binding residues include asparagine 13, glutamine 46, and asparagine 66. Catalysis depends on cysteine 75, which acts as the Proton donor. Residues 76 to 77 (GN), asparagine 160, asparagine 193, and 211 to 212 (ER) each bind substrate. The active-site Proton acceptor is cysteine 220. 221-222 (GT) contributes to the substrate binding site.

This sequence belongs to the diaminopimelate epimerase family. In terms of assembly, homodimer.

It localises to the cytoplasm. It carries out the reaction (2S,6S)-2,6-diaminopimelate = meso-2,6-diaminopimelate. Its pathway is amino-acid biosynthesis; L-lysine biosynthesis via DAP pathway; DL-2,6-diaminopimelate from LL-2,6-diaminopimelate: step 1/1. Functionally, catalyzes the stereoinversion of LL-2,6-diaminopimelate (L,L-DAP) to meso-diaminopimelate (meso-DAP), a precursor of L-lysine and an essential component of the bacterial peptidoglycan. This chain is Diaminopimelate epimerase, found in Acinetobacter baumannii (strain AB307-0294).